A 410-amino-acid polypeptide reads, in one-letter code: Cytohesin-2 (410 aa).

Residues 13-56 (PEERMELENIRRRKQELLVEIQRLREELSEAMSEVEGLEANEGS) are a coiled coil. The 188-residue stretch at 54–241 (EGSKTLQRNR…RNLYDSIRNE (188 aa)) folds into the SEC7 domain. One can recognise a PH domain in the interval 259 to 386 (NPDREGWLLK…WIKSIQAAVS (128 aa)). Residues 268–271 (KLGA), Arg290, Tyr301, Arg311, Lys349, Asn360, and His361 each bind a 1,2-diacyl-sn-glycero-3-phospho-(1D-myo-inositol-3,4,5-trisphosphate). The interval 397–405 (RKKRISVKK) is C-terminal autoinhibitory region.

In terms of assembly, heteromer. Composed of TAMALIN, CYTH2 and at least one GRM1. Interacts with ARRB1. Interacts with ARL4D; the interaction is direct. Directly interacts with CCDC120 through the coiled coil domain; this interaction stabilizes CCDC120, possibly by preventing its ubiquitination, and is required for neurite growth in neuroblastoma cells. Interacts (via N-terminal domain) with INAVA (via N-terminal domain).

Its subcellular location is the cell membrane. It localises to the cytoplasm. The protein resides in the cell projection. It is found in the growth cone. Acts as a guanine-nucleotide exchange factor (GEF). Promotes guanine-nucleotide exchange on ARF1, ARF3 and ARF6. Promotes the activation of ARF factors through replacement of GDP with GTP. The cell membrane form, in association with ARL4 proteins, recruits ARF6 to the plasma membrane. Involved in neurite growth. The protein is Cytohesin-2 (CYTH2) of Bos taurus (Bovine).